Reading from the N-terminus, the 563-residue chain is Sulfite reductase [NADPH] hemoprotein beta-component (563 aa).

Residues cysteine 427, cysteine 433, cysteine 472, and cysteine 476 each coordinate [4Fe-4S] cluster. Residue cysteine 476 participates in siroheme binding.

This sequence belongs to the nitrite and sulfite reductase 4Fe-4S domain family. Alpha(8)-beta(8). The alpha component is a flavoprotein, the beta component is a hemoprotein. It depends on siroheme as a cofactor. Requires [4Fe-4S] cluster as cofactor.

The catalysed reaction is hydrogen sulfide + 3 NADP(+) + 3 H2O = sulfite + 3 NADPH + 4 H(+). Its pathway is sulfur metabolism; hydrogen sulfide biosynthesis; hydrogen sulfide from sulfite (NADPH route): step 1/1. In terms of biological role, component of the sulfite reductase complex that catalyzes the 6-electron reduction of sulfite to sulfide. This is one of several activities required for the biosynthesis of L-cysteine from sulfate. The polypeptide is Sulfite reductase [NADPH] hemoprotein beta-component (Shewanella frigidimarina (strain NCIMB 400)).